A 349-amino-acid polypeptide reads, in one-letter code: tRNA pseudouridine synthase D (349 aa).

Phe27 contributes to the substrate binding site. Residue Asp80 is the Nucleophile of the active site. Residue Asn129 participates in substrate binding. The TRUD domain maps to 155–303; the sequence is GVPNYFGAQR…VEAARRAMLL (149 aa). Phe329 provides a ligand contact to substrate.

It belongs to the pseudouridine synthase TruD family.

It catalyses the reaction uridine(13) in tRNA = pseudouridine(13) in tRNA. Responsible for synthesis of pseudouridine from uracil-13 in transfer RNAs. The protein is tRNA pseudouridine synthase D of Escherichia coli O6:H1 (strain CFT073 / ATCC 700928 / UPEC).